A 304-amino-acid polypeptide reads, in one-letter code: Glutaminase (304 aa).

Residues Ser63, Asn114, Glu158, Asn165, Tyr189, Tyr240, and Val258 each contribute to the substrate site.

The protein belongs to the glutaminase family. In terms of assembly, homotetramer.

It catalyses the reaction L-glutamine + H2O = L-glutamate + NH4(+). The chain is Glutaminase from Shewanella baltica (strain OS195).